The chain runs to 1594 residues: Protein SHORTAGE IN CHIASMATA 1 (1594 aa).

5 disordered regions span residues D1148–K1180, A1239–F1283, A1396–N1426, R1491–R1523, and G1536–K1594. Low complexity predominate over residues S1151–D1165. Composition is skewed to basic and acidic residues over residues P1254–S1265 and S1402–Y1414. Positions Q1577–K1594 are enriched in polar residues.

The protein belongs to the XPF family. As to quaternary structure, interacts with PTD. In terms of tissue distribution, highest levels in young buds, where male meiosis occurs. Also present at low levels in plantlets, leaves, flowers, and roots.

The protein localises to the nucleus. Essential for the formation of class I meiotic crossovers. This chain is Protein SHORTAGE IN CHIASMATA 1, found in Arabidopsis thaliana (Mouse-ear cress).